The sequence spans 122 residues: Large ribosomal subunit protein uL14 (122 aa).

Belongs to the universal ribosomal protein uL14 family. As to quaternary structure, part of the 50S ribosomal subunit. Forms a cluster with proteins L3 and L19. In the 70S ribosome, L14 and L19 interact and together make contacts with the 16S rRNA in bridges B5 and B8.

Binds to 23S rRNA. Forms part of two intersubunit bridges in the 70S ribosome. This Mycolicibacterium vanbaalenii (strain DSM 7251 / JCM 13017 / BCRC 16820 / KCTC 9966 / NRRL B-24157 / PYR-1) (Mycobacterium vanbaalenii) protein is Large ribosomal subunit protein uL14.